We begin with the raw amino-acid sequence, 322 residues long: Protein mono-ADP-ribosyltransferase PARP16 (322 aa).

Over 1 to 287 the chain is Cytoplasmic; that stretch reads MQLSNRAAAR…RASSQLSWLS (287 aa). A PARP alpha-helical domain is found at 5–91; it reads NRAAAREAAS…AWDLVSWILS (87 aa). Residues 94–279 form the PARP catalytic domain; that stretch reads ILTIHSAKKA…VYSQKQPKRA (186 aa). Residues His-152, Tyr-182, and Tyr-254 each contribute to the NAD(+) site. A helical transmembrane segment spans residues 288–308; sequence SHWFVIMMSLYLLLLLIVSVT. Residues 309 to 322 lie on the Lumenal side of the membrane; it reads NSSVFHHFWNRVKR.

This sequence belongs to the ARTD/PARP family. As to quaternary structure, interacts with KPNB1. Post-translationally, auto-mono-ADP-ribosylated.

It localises to the endoplasmic reticulum membrane. The enzyme catalyses L-aspartyl-[protein] + NAD(+) = 4-O-(ADP-D-ribosyl)-L-aspartyl-[protein] + nicotinamide. It carries out the reaction L-lysyl-[protein] + NAD(+) = N(6)-(ADP-D-ribosyl)-L-lysyl-[protein] + nicotinamide + H(+). The catalysed reaction is L-glutamyl-[protein] + NAD(+) = 5-O-(ADP-D-ribosyl)-L-glutamyl-[protein] + nicotinamide. In absence of activation signal, PARP16 is autoinhibited by the PARP alpha-helical domain (also named HD region), which prevents effective NAD(+)-binding. Activity is highly stimulated by signals, which unfold the PARP alpha-helical domain, relieving autoinhibition. Functionally, intracellular mono-ADP-ribosyltransferase that plays a role in different processes, such as protein translation and unfolded protein response (UPR), through the mono-ADP-ribosylation of proteins involved in those processes. Acts as an inhibitor of protein translation by catalyzing mono-ADP-ribosylation of ribosomal subunits, such as RPL14 and RPS6, thereby inhibiting polysome assembly and mRNA loading. Mono-ADP-ribosylation of ribosomal subunits is promoted by NMNAT2. Involved in the unfolded protein response (UPR) by ADP-ribosylating and activating EIF2AK3 and ERN1, two important UPR effectors. May also mediate mono-ADP-ribosylation of karyopherin KPNB1 a nuclear import factor. May not modify proteins on arginine or cysteine residues compared to other mono-ADP-ribosyltransferases. This is Protein mono-ADP-ribosyltransferase PARP16 from Mus musculus (Mouse).